Consider the following 446-residue polypeptide: Dual specificity mitogen-activated protein kinase kinase 2 (446 aa).

Positions 27-42 (SSGSSAGLGFQGQSQQ) are enriched in low complexity. The disordered stretch occupies residues 27-51 (SSGSSAGLGFQGQSQQHSTVNSMQG). Residues 149 to 414 (LKDLGEIGRG…YKELLKHPFI (266 aa)) enclose the Protein kinase domain. ATP-binding positions include 155 to 163 (IGRGAYGSV) and Lys-178. Asp-276 (proton acceptor) is an active-site residue. Residue Ser-304 is modified to Phosphoserine; by RAF. Position 308 is a phosphothreonine; by RAF (Thr-308).

It belongs to the protein kinase superfamily. STE Ser/Thr protein kinase family. MAP kinase kinase subfamily. MAPKK is itself dependent on Ser/Thr phosphorylation for activity catalyzed by MAP kinase kinase kinases. In terms of tissue distribution, expressed abundantly in the adult brain and muscle.

The catalysed reaction is L-seryl-[protein] + ATP = O-phospho-L-seryl-[protein] + ADP + H(+). It carries out the reaction L-threonyl-[protein] + ATP = O-phospho-L-threonyl-[protein] + ADP + H(+). It catalyses the reaction L-tyrosyl-[protein] + ATP = O-phospho-L-tyrosyl-[protein] + ADP + H(+). In terms of biological role, catalyzes the concomitant phosphorylation of a threonine and a tyrosine residue in a Thr-Glu-Tyr sequence located in MAP kinases. This is Dual specificity mitogen-activated protein kinase kinase 2 (map2k2) from Xenopus laevis (African clawed frog).